The primary structure comprises 301 residues: Indole-3-glycerol phosphate synthase (301 aa).

Belongs to the TrpC family.

The enzyme catalyses 1-(2-carboxyphenylamino)-1-deoxy-D-ribulose 5-phosphate + H(+) = (1S,2R)-1-C-(indol-3-yl)glycerol 3-phosphate + CO2 + H2O. It functions in the pathway amino-acid biosynthesis; L-tryptophan biosynthesis; L-tryptophan from chorismate: step 4/5. The chain is Indole-3-glycerol phosphate synthase from Prochlorococcus marinus (strain MIT 9313).